A 206-amino-acid chain; its full sequence is Putative 3-methyladenine DNA glycosylase (206 aa).

This sequence belongs to the DNA glycosylase MPG family.

This chain is Putative 3-methyladenine DNA glycosylase, found in Rhodopseudomonas palustris (strain ATCC BAA-98 / CGA009).